The sequence spans 203 residues: RNA annealing protein YRA2 (203 aa).

Methionine 1 is modified (N-acetylmethionine). Disordered regions lie at residues 1–60 (MDKA…REEP) and 137–203 (QPQR…YMKG). A compositionally biased stretch (polar residues) spans 11–20 (NSHTDSSSNH). Residues 47-60 (SRSKDRLYREREEP) are compositionally biased toward basic and acidic residues. Positions 64-138 (KRIRISKIPL…AKIEVEIYQP (75 aa)) constitute an RRM domain. 2 stretches are compositionally biased toward basic residues: residues 139–153 (QRKHSRMNAHNRRKQ) and 163–180 (PGSHYRQRPNRVSKKNKG).

Belongs to the YRA1 family. Associates with mRNPs. Interacts with YRA1.

It is found in the nucleus. Functionally, involved in export of poly(A) mRNAs from the nucleus. Recruited to the coding sequences as well as poly-A sites of active genes. This chain is RNA annealing protein YRA2 (YRA2), found in Saccharomyces cerevisiae (strain Lalvin EC1118 / Prise de mousse) (Baker's yeast).